A 4116-amino-acid polypeptide reads, in one-letter code: Dynein axonemal heavy chain 3 (4116 aa).

Disordered stretches follow at residues methionine 1–glutamate 68 and valine 137–serine 172. A stem region spans residues methionine 1–leucine 1390. Over residues glycine 145–glutamate 156 the composition is skewed to polar residues. Residues aspartate 785–glutamate 852 are a coiled coil. AAA regions lie at residues tyrosine 1391–alanine 1612, lysine 1672–lysine 1903, lysine 2036–glycine 2284, and glutamate 2395–histidine 2646. ATP is bound by residues glycine 1429–threonine 1436, glycine 1710–threonine 1717, glycine 2074–serine 2081, and glycine 2434–glutamine 2441. The tract at residues phenylalanine 2661–cysteine 2960 is stalk. AAA stretches follow at residues leucine 3045–glutamate 3275 and valine 3488–methionine 3712.

The protein belongs to the dynein heavy chain family. Consists of at least two heavy chains and a number of intermediate and light chains. In terms of tissue distribution, expressed primarily in trachea and testis, 2 tissues containing axonemal structures. Also expressed in lung.

It localises to the cytoplasm. The protein resides in the cytoskeleton. It is found in the cilium axoneme. In terms of biological role, force generating protein of respiratory cilia. Produces force towards the minus ends of microtubules. Dynein has ATPase activity; the force-producing power stroke is thought to occur on release of ADP. Involved in sperm motility; implicated in sperm flagellar assembly. The protein is Dynein axonemal heavy chain 3 (DNAH3) of Homo sapiens (Human).